The following is a 400-amino-acid chain: Axin-like protein 1 (400 aa).

In terms of domain architecture, RGS spans 4-132 (RSKFSIDRVL…TTTADVNTTW (129 aa)). Disordered regions lie at residues 190–233 (QETK…TLKV) and 278–306 (GTLERPNRLFTGTNNGFSTLQPKRRGSEA). A compositionally biased stretch (basic and acidic residues) spans 194–210 (NSSETEEHAESPRKEKS). Polar residues predominate over residues 287–298 (FTGTNNGFSTLQ). The region spanning 305–392 (EAPKMTVELR…RITAICRMCP (88 aa)) is the DIX domain.

In terms of assembly, interacts with bar-1, dsh-2, gsk-3, and mig-5.

Its function is as follows. Works in parallel with pry-1 in negatively regulating bar-1 signaling in vulval precursor cells and Q neuroblasts. Shown to have a role in excretory cell development. This Caenorhabditis elegans protein is Axin-like protein 1.